The sequence spans 625 residues: MKFDVIVIGGGHAGIEAALASARMGMKTLMITILAEQIGAASCNPAIGGLAKGHLVKEIDALGGQMGLTTDKTGIQFRILNASKGPAVRGSRAQIDMDRYRIMMRTIVLNTPNLEVRQEMVDRLLIKGDAVVGVETNLKNVYHAKKVIVTTGTFLRGLIHIGEIKQEAGRAGEFASNALSDSLKSLGLRLGRLKTGTCARIDAKTIDFSRMEVQPGDENPIPFSFRTDRKRFNPTQLPCYITYTNERTHEIIESNFHRAPLFTGQIEGVGPRYCPSIEDKIYRFRDKERHHIFVEPQTLEATEYYINGMSTSLPPDVQLEMIRSVKGLEHAEVVRYGYAIEYDFVDPTQLKHTLETKSIKNLYCAGQINGTTGYEEAAAQGLMAGINAALAIKEQEPLILGRDEAYIGVLIDDLVTKGTKEPYRMFTSRAEFRLLLREDNADLRLMPYGHKLGLVDEETYMKMIRKKEQIEKGLDLLKNSFITPNKETLELLSSLEEGKITDKTALVNVVARPTFTMEKLEVLVPEIQEFSEEAKEQILIEAKYHQYIQMQKEQIEKMHELMNVKIPEDLDIDAISGLSNEVKEKLKAHKPPTLFAASQISGITPAAIEILHIYIKMHQKRRVTK.

Residues 9–14, Val-121, and Ser-176 each bind FAD; that span reads GGGHAG. 270-284 contacts NAD(+); that stretch reads GPRYCPSIEDKIYRF. Gln-367 provides a ligand contact to FAD.

The protein belongs to the MnmG family. Homodimer. Heterotetramer of two MnmE and two MnmG subunits. FAD serves as cofactor.

Its subcellular location is the cytoplasm. In terms of biological role, NAD-binding protein involved in the addition of a carboxymethylaminomethyl (cmnm) group at the wobble position (U34) of certain tRNAs, forming tRNA-cmnm(5)s(2)U34. The sequence is that of tRNA uridine 5-carboxymethylaminomethyl modification enzyme MnmG from Nitratiruptor sp. (strain SB155-2).